A 451-amino-acid chain; its full sequence is Tubulin alpha-1 chain (451 aa).

Gln11 serves as a coordination point for GTP. Lys40 carries the N6-acetyllysine modification. Residues Glu71, Gly144, Thr145, Thr179, Asn206, and Asn228 each coordinate GTP. Glu71 contributes to the Mg(2+) binding site. Glu254 is an active-site residue.

It belongs to the tubulin family. As to quaternary structure, dimer of alpha and beta chains. A typical microtubule is a hollow water-filled tube with an outer diameter of 25 nm and an inner diameter of 15 nM. Alpha-beta heterodimers associate head-to-tail to form protofilaments running lengthwise along the microtubule wall with the beta-tubulin subunit facing the microtubule plus end conferring a structural polarity. Microtubules usually have 13 protofilaments but different protofilament numbers can be found in some organisms and specialized cells. It depends on Mg(2+) as a cofactor. Undergoes a tyrosination/detyrosination cycle, the cyclic removal and re-addition of a C-terminal tyrosine residue by the enzymes tubulin tyrosine carboxypeptidase (TTCP) and tubulin tyrosine ligase (TTL), respectively. Post-translationally, acetylation of alpha chains at Lys-40 stabilizes microtubules and affects affinity and processivity of microtubule motors. This modification has a role in multiple cellular functions, ranging from cell motility, cell cycle progression or cell differentiation to intracellular trafficking and signaling.

The protein localises to the cytoplasm. Its subcellular location is the cytoskeleton. The enzyme catalyses GTP + H2O = GDP + phosphate + H(+). Its function is as follows. Tubulin is the major constituent of microtubules, a cylinder consisting of laterally associated linear protofilaments composed of alpha- and beta-tubulin heterodimers. Microtubules grow by the addition of GTP-tubulin dimers to the microtubule end, where a stabilizing cap forms. Below the cap, tubulin dimers are in GDP-bound state, owing to GTPase activity of alpha-tubulin. This is Tubulin alpha-1 chain (TUBA1) from Zea mays (Maize).